A 332-amino-acid chain; its full sequence is Protoheme IX farnesyltransferase (332 aa).

The next 7 membrane-spanning stretches (helical) occupy residues 63-83 (LICTLGGGALAAAAAGALNCL), 109-129 (TVFLGAVSCTLAAAMLLISGV), 132-152 (LAAGLTLLGLCSYVILYTIIL), 160-180 (IVFGGVAGAIPPLVGASAATG), 188-208 (WLFSLVMLWTPAHFWALAILL), 245-265 (ILGVFALPEGGILYLIMLLPF), and 286-306 (AKGLFRWSILYMFGICLLLLI).

It belongs to the UbiA prenyltransferase family. Protoheme IX farnesyltransferase subfamily.

It localises to the cell inner membrane. It carries out the reaction heme b + (2E,6E)-farnesyl diphosphate + H2O = Fe(II)-heme o + diphosphate. It functions in the pathway porphyrin-containing compound metabolism; heme O biosynthesis; heme O from protoheme: step 1/1. In terms of biological role, converts heme B (protoheme IX) to heme O by substitution of the vinyl group on carbon 2 of heme B porphyrin ring with a hydroxyethyl farnesyl side group. In Prochlorococcus marinus subsp. pastoris (strain CCMP1986 / NIES-2087 / MED4), this protein is Protoheme IX farnesyltransferase.